The primary structure comprises 124 residues: Small ribosomal subunit protein uS12 (124 aa).

Residue aspartate 89 is modified to 3-methylthioaspartic acid. A disordered region spans residues aspartate 103–glutamate 124.

Belongs to the universal ribosomal protein uS12 family. As to quaternary structure, part of the 30S ribosomal subunit. Contacts proteins S8 and S17. May interact with IF1 in the 30S initiation complex.

Its function is as follows. With S4 and S5 plays an important role in translational accuracy. Interacts with and stabilizes bases of the 16S rRNA that are involved in tRNA selection in the A site and with the mRNA backbone. Located at the interface of the 30S and 50S subunits, it traverses the body of the 30S subunit contacting proteins on the other side and probably holding the rRNA structure together. The combined cluster of proteins S8, S12 and S17 appears to hold together the shoulder and platform of the 30S subunit. The sequence is that of Small ribosomal subunit protein uS12 from Prochlorococcus marinus (strain NATL1A).